We begin with the raw amino-acid sequence, 137 residues long: Small ribosomal subunit protein uS12 (137 aa).

Residues 1–44 form a disordered region; it reads MPTINQLVRKGRKSRTSKSDAPALNFGYNSMKKKATDNPAPQKR. Aspartate 102 is modified (3-methylthioaspartic acid).

Belongs to the universal ribosomal protein uS12 family. In terms of assembly, part of the 30S ribosomal subunit. Contacts proteins S8 and S17. May interact with IF1 in the 30S initiation complex.

With S4 and S5 plays an important role in translational accuracy. Its function is as follows. Interacts with and stabilizes bases of the 16S rRNA that are involved in tRNA selection in the A site and with the mRNA backbone. Located at the interface of the 30S and 50S subunits, it traverses the body of the 30S subunit contacting proteins on the other side and probably holding the rRNA structure together. The combined cluster of proteins S8, S12 and S17 appears to hold together the shoulder and platform of the 30S subunit. This Latilactobacillus sakei subsp. sakei (strain 23K) (Lactobacillus sakei subsp. sakei) protein is Small ribosomal subunit protein uS12.